The sequence spans 191 residues: Ribosome maturation factor RimP (191 aa).

It belongs to the RimP family.

It localises to the cytoplasm. Its function is as follows. Required for maturation of 30S ribosomal subunits. The chain is Ribosome maturation factor RimP from Caulobacter vibrioides (strain NA1000 / CB15N) (Caulobacter crescentus).